A 247-amino-acid chain; its full sequence is 3-deoxy-manno-octulosonate cytidylyltransferase (247 aa).

Belongs to the KdsB family.

Its subcellular location is the cytoplasm. It catalyses the reaction 3-deoxy-alpha-D-manno-oct-2-ulosonate + CTP = CMP-3-deoxy-beta-D-manno-octulosonate + diphosphate. Its pathway is nucleotide-sugar biosynthesis; CMP-3-deoxy-D-manno-octulosonate biosynthesis; CMP-3-deoxy-D-manno-octulosonate from 3-deoxy-D-manno-octulosonate and CTP: step 1/1. The protein operates within bacterial outer membrane biogenesis; lipopolysaccharide biosynthesis. Functionally, activates KDO (a required 8-carbon sugar) for incorporation into bacterial lipopolysaccharide in Gram-negative bacteria. The protein is 3-deoxy-manno-octulosonate cytidylyltransferase of Methylobacterium sp. (strain 4-46).